Here is a 194-residue protein sequence, read N- to C-terminus: Putative manganese efflux pump MntP (194 aa).

Transmembrane regions (helical) follow at residues 6–26, 35–55, 66–86, 109–129, 142–162, and 174–194; these read LILVAVALGTDAFSLATGLAL, WLFAGTVGLFHIFMPLAGLYL, VAAIIGALVLATMGTLMLWEA, GVLGGVMAILFMAGSVSLDAL, VPLTVLTMGFIAATMTALGLL, and RAELAGGLILVAIGLKMLVGV.

The protein belongs to the MntP (TC 9.B.29) family.

Its subcellular location is the cell membrane. Probably functions as a manganese efflux pump. The sequence is that of Putative manganese efflux pump MntP from Moorella thermoacetica (strain ATCC 39073 / JCM 9320).